The following is a 169-amino-acid chain: Ecotin (169 aa).

The signal sequence occupies residues 1-21; that stretch reads MKKCSIILASVLLATSINAIA. C76 and C113 are oxidised to a cystine.

It belongs to the protease inhibitor I11 (ecotin) family. As to quaternary structure, homodimer.

Its subcellular location is the periplasm. General inhibitor of pancreatic serine proteases: inhibits chymotrypsin, trypsin, elastases, factor X, kallikrein as well as a variety of other proteases. This chain is Ecotin, found in Yersinia pseudotuberculosis serotype O:1b (strain IP 31758).